A 320-amino-acid chain; its full sequence is MDYRVLLYYKYTTIDDPETFAAEHLEFCKSNNLKGRILVSTEGINGTLSGTKEDTDKYIEHMHSDERFADMTFKIDEAEGHAFKKMHVRPRNEIVALGLEDDVDPRVTTGKYYSPSEFKEALEDEDTVILDARNDYEFDLGHFRGAIRPDITRFRDLPDWIRENKDQLDGKNIVTYCTGGIRCEKFSGWLVKEGFENVGQLHGGIATYGKDPETKGQYWDGKMYVFDERISVDVNQVEKTVIGKEHFDGTPCERYINCSNPECNKQILVSEENEDKYLGACSYDCAKHERNRYVAKNNISDEEWNRRLENFKDVPEHAHA.

The region spanning 123–217 is the Rhodanese domain; the sequence is EDEDTVILDA…YGKDPETKGQ (95 aa). The Cysteine persulfide intermediate role is filled by cysteine 177.

The protein belongs to the TrhO family.

It carries out the reaction uridine(34) in tRNA + AH2 + O2 = 5-hydroxyuridine(34) in tRNA + A + H2O. In terms of biological role, catalyzes oxygen-dependent 5-hydroxyuridine (ho5U) modification at position 34 in tRNAs. The chain is tRNA uridine(34) hydroxylase from Staphylococcus haemolyticus (strain JCSC1435).